The chain runs to 115 residues: Guanylin (115 aa).

Positions methionine 1–glycine 21 are cleaved as a signal peptide. Positions valine 22 to aspartate 100 are excised as a propeptide. Disulfide bonds link cysteine 69/cysteine 82, cysteine 104/cysteine 112, and cysteine 107/cysteine 115.

Belongs to the guanylin family.

It localises to the secreted. In terms of biological role, endogenous activator of intestinal guanylate cyclase. It stimulates this enzyme through the same receptor binding region as the heat-stable enterotoxins. This Notomys alexis (Spinifex hopping mouse) protein is Guanylin (GUCA2A).